An 82-amino-acid chain; its full sequence is Colonization factor (82 aa).

Positions 1-33 (MFSSLKNKLNTFKSTLSLGVFLLFSAFANQALA) are cleaved as a signal peptide.

The protein localises to the secreted. The polypeptide is Colonization factor (cep) (Vibrio cholerae serotype O1 (strain ATCC 39315 / El Tor Inaba N16961)).